Consider the following 404-residue polypeptide: Dual-specificity RNA methyltransferase RlmN (404 aa).

Catalysis depends on glutamate 119, which acts as the Proton acceptor. One can recognise a Radical SAM core domain in the interval 126 to 358; it reads VGRAGALCVS…NKAGYSSPIR (233 aa). A disulfide bridge connects residues cysteine 133 and cysteine 369. Residues cysteine 140, cysteine 144, and cysteine 147 each coordinate [4Fe-4S] cluster. S-adenosyl-L-methionine contacts are provided by residues 195–196, serine 227, 249–251, and asparagine 326; these read GE and SLH. The active-site S-methylcysteine intermediate is cysteine 369.

This sequence belongs to the radical SAM superfamily. RlmN family. [4Fe-4S] cluster serves as cofactor.

The protein resides in the cytoplasm. It carries out the reaction adenosine(2503) in 23S rRNA + 2 reduced [2Fe-2S]-[ferredoxin] + 2 S-adenosyl-L-methionine = 2-methyladenosine(2503) in 23S rRNA + 5'-deoxyadenosine + L-methionine + 2 oxidized [2Fe-2S]-[ferredoxin] + S-adenosyl-L-homocysteine. The catalysed reaction is adenosine(37) in tRNA + 2 reduced [2Fe-2S]-[ferredoxin] + 2 S-adenosyl-L-methionine = 2-methyladenosine(37) in tRNA + 5'-deoxyadenosine + L-methionine + 2 oxidized [2Fe-2S]-[ferredoxin] + S-adenosyl-L-homocysteine. Specifically methylates position 2 of adenine 2503 in 23S rRNA and position 2 of adenine 37 in tRNAs. m2A2503 modification seems to play a crucial role in the proofreading step occurring at the peptidyl transferase center and thus would serve to optimize ribosomal fidelity. In Caulobacter sp. (strain K31), this protein is Dual-specificity RNA methyltransferase RlmN.